Consider the following 1168-residue polypeptide: Myosin IC heavy chain (1168 aa).

Residues 7-666 enclose the Myosin motor domain; it reads HGVDDMVMLT…SVFSLEELRD (660 aa). ATP is bound at residue 101–108; sequence GESGAGKT. Serine 311 is modified (phosphoserine). The tract at residues 542–564 is actin-binding; that stretch reads INILVATLSKCTPHYIRCIKPNE. One can recognise a TH1 domain in the interval 704–892; that stretch reads KERRRLSLER…KVSVAPGLPP (189 aa). Disordered stretches follow at residues 876-909, 921-978, and 1036-1168; these read DGKV…GGAS, ILGA…APGP, and AAAP…PPGM. A compositionally biased stretch (polar residues) spans 895 to 909; the sequence is APNIQAPQETSGGAS. Gly residues-rich tracts occupy residues 924–939 and 950–959; these read AKGG…GGPS and PGGGGGGPSP. A compositionally biased stretch (low complexity) spans 960–978; the sequence is FGGRPSPSGPPAAASAPGP. Positions 976–1035 constitute an SH3 domain; the sequence is PGPEQARALYDFAAENPDELTFNEGAVVTVINKSNPDWWEGELNGQRGVFPASYVELIPR. Residues 1040–1052 are compositionally biased toward pro residues; the sequence is APGPSGGPRPAPP. Composition is skewed to gly residues over residues 1063 to 1083 and 1090 to 1099; these read GGPG…GRGG and GRAGPPGGRG. The segment covering 1100-1112 has biased composition (low complexity); that stretch reads MPAPGGAAPRGRG. Positions 1120-1141 are enriched in gly residues; sequence GPPGGGRGGAPPPGGMRGRGGP. A compositionally biased stretch (low complexity) spans 1152–1161; sequence GGMMPPRGRA.

It belongs to the TRAFAC class myosin-kinesin ATPase superfamily. Myosin family. In terms of assembly, myosin I heavy chain is single-headed. Dimer of a heavy and a light chain. Inability to self-assemble into filaments.

Myosin is a protein that binds to F-actin and has ATPase activity that is activated by F-actin. The sequence is that of Myosin IC heavy chain (MIC) from Acanthamoeba castellanii (Amoeba).